The sequence spans 131 residues: Transcription antitermination protein NusB (131 aa).

This sequence belongs to the NusB family.

Its function is as follows. Involved in transcription antitermination. Required for transcription of ribosomal RNA (rRNA) genes. Binds specifically to the boxA antiterminator sequence of the ribosomal RNA (rrn) operons. The protein is Transcription antitermination protein NusB of Campylobacter concisus (strain 13826).